Here is a 313-residue protein sequence, read N- to C-terminus: UPF0761 membrane protein VS_0126 (313 aa).

A run of 6 helical transmembrane segments spans residues 41-61 (YLAYITLLSIVPMLTVLLSIL), 104-124 (MTAVGSVFLFIAALMLISNID), 139-159 (AVLSFSMYWMVLTLGPILIGA), 185-205 (VIRKLPLITSFFAFFGLYLLV), 217-237 (AGSLVAALLFELSKKGFAAYI), and 249-269 (ALAAIPILFVWVYLCWLIVLV). Residues 281–290 (EQWSDSQEMV) are compositionally biased toward polar residues. The segment at 281–313 (EQWSDSQEMVHSSDKDKITEQGNNSDSTDPESK) is disordered.

It belongs to the UPF0761 family.

The protein localises to the cell inner membrane. In Vibrio atlanticus (strain LGP32) (Vibrio splendidus (strain Mel32)), this protein is UPF0761 membrane protein VS_0126.